A 204-amino-acid chain; its full sequence is Probable UbiX-like flavin prenyltransferase (204 aa).

FMN-binding positions include 21–23 (GAT), Ser47, 98–101 (SMKS), and Arg133.

This sequence belongs to the UbiX/PAD1 family. YclB subfamily. As to quaternary structure, homododecamer.

The enzyme catalyses dimethylallyl phosphate + FMNH2 = prenylated FMNH2 + phosphate. Its function is as follows. Involved in the non-oxidative decarboxylation and detoxification of phenolic derivatives under both aerobic and anaerobic conditions. Flavin prenyltransferase that catalyzes the synthesis of the prenylated FMN cofactor (prenyl-FMN) for phenolic acid decarboxylase. The protein is Probable UbiX-like flavin prenyltransferase of Bacillus subtilis (strain 168).